We begin with the raw amino-acid sequence, 559 residues long: Acetylcholinesterase-1 (559 aa).

The first 21 residues, 1 to 21 (MMLPRCFVTVLLMSSVLYIGG), serve as a signal peptide directing secretion. Cys-92 and Cys-114 form a disulfide bridge. 142-143 (GG) provides a ligand contact to substrate. Ser-223 (acyl-ester intermediate) is an active-site residue. Ser-223 is modified (phosphoserine). Cys-276 and Cys-293 are disulfide-bonded. N-linked (GlcNAc...) asparagine glycosylation is found at Asn-278 and Asn-342. Glu-354 acts as the Charge relay system in catalysis. N-linked (GlcNAc...) asparagine glycosylation is present at Asn-374. Residues Cys-432 and Cys-550 are joined by a disulfide bond. His-471 serves as the catalytic Charge relay system.

This sequence belongs to the type-B carboxylesterase/lipase family. As to expression, expressed by the venom gland.

The protein resides in the secreted. It catalyses the reaction acetylcholine + H2O = choline + acetate + H(+). Terminates signal transduction at the neuromuscular junction by rapid hydrolysis of the acetylcholine released into the synaptic cleft. In Trittame loki (Brush-footed trapdoor spider), this protein is Acetylcholinesterase-1.